A 355-amino-acid polypeptide reads, in one-letter code: Peptide chain release factor 1 (355 aa).

An N5-methylglutamine modification is found at glutamine 232.

It belongs to the prokaryotic/mitochondrial release factor family. Post-translationally, methylated by PrmC. Methylation increases the termination efficiency of RF1.

The protein localises to the cytoplasm. Peptide chain release factor 1 directs the termination of translation in response to the peptide chain termination codons UAG and UAA. This is Peptide chain release factor 1 from Thermobifida fusca (strain YX).